The sequence spans 906 residues: Protein translocase subunit SecA (906 aa).

ATP-binding positions include Q89, 107-111 (GEGKT), and D502. C890, C892, C901, and H902 together coordinate Zn(2+).

Belongs to the SecA family. Monomer and homodimer. Part of the essential Sec protein translocation apparatus which comprises SecA, SecYEG and auxiliary proteins SecDF-YajC and YidC. The cofactor is Zn(2+).

It localises to the cell inner membrane. The protein localises to the cytoplasm. It catalyses the reaction ATP + H2O + cellular proteinSide 1 = ADP + phosphate + cellular proteinSide 2.. Functionally, part of the Sec protein translocase complex. Interacts with the SecYEG preprotein conducting channel. Has a central role in coupling the hydrolysis of ATP to the transfer of proteins into and across the cell membrane, serving both as a receptor for the preprotein-SecB complex and as an ATP-driven molecular motor driving the stepwise translocation of polypeptide chains across the membrane. The sequence is that of Protein translocase subunit SecA from Brucella suis biovar 1 (strain 1330).